The sequence spans 153 residues: Transcriptional repressor NrdR (153 aa).

Residues 3 to 34 (CPFCGYEDTRVLDSRELSEGRAIRRRRECPQC) fold into a zinc finger. The region spanning 49 to 139 (ITVIKKDGRR…VYKDFREIDQ (91 aa)) is the ATP-cone domain.

The protein belongs to the NrdR family. Zn(2+) is required as a cofactor.

Negatively regulates transcription of bacterial ribonucleotide reductase nrd genes and operons by binding to NrdR-boxes. This chain is Transcriptional repressor NrdR, found in Fervidobacterium nodosum (strain ATCC 35602 / DSM 5306 / Rt17-B1).